The sequence spans 215 residues: Cytochrome b6 (215 aa).

Residues isoleucine 32 to phenylalanine 52 traverse the membrane as a helical segment. Cysteine 35 serves as a coordination point for heme c. Histidine 86 and histidine 100 together coordinate heme b. 3 helical membrane passes run alanine 90–phenylalanine 110, leucine 116–tyrosine 136, and leucine 186–isoleucine 206. Residues histidine 187 and histidine 202 each coordinate heme b.

It belongs to the cytochrome b family. PetB subfamily. In terms of assembly, the 4 large subunits of the cytochrome b6-f complex are cytochrome b6, subunit IV (17 kDa polypeptide, PetD), cytochrome f and the Rieske protein, while the 4 small subunits are PetG, PetL, PetM and PetN. The complex functions as a dimer. It depends on heme b as a cofactor. The cofactor is heme c.

The protein localises to the plastid. Its subcellular location is the chloroplast thylakoid membrane. Functionally, component of the cytochrome b6-f complex, which mediates electron transfer between photosystem II (PSII) and photosystem I (PSI), cyclic electron flow around PSI, and state transitions. The chain is Cytochrome b6 from Eucalyptus globulus subsp. globulus (Tasmanian blue gum).